A 336-amino-acid polypeptide reads, in one-letter code: Inositol 2-dehydrogenase (336 aa).

The protein belongs to the Gfo/Idh/MocA family. In terms of assembly, homotetramer.

The enzyme catalyses myo-inositol + NAD(+) = scyllo-inosose + NADH + H(+). Functionally, involved in the oxidation of myo-inositol (MI) to 2-keto-myo-inositol (2KMI or 2-inosose). This chain is Inositol 2-dehydrogenase, found in Salmonella agona (strain SL483).